We begin with the raw amino-acid sequence, 134 residues long: ATP synthase epsilon chain (134 aa).

Belongs to the ATPase epsilon chain family. In terms of assembly, F-type ATPases have 2 components, CF(1) - the catalytic core - and CF(0) - the membrane proton channel. CF(1) has five subunits: alpha(3), beta(3), gamma(1), delta(1), epsilon(1). CF(0) has three main subunits: a, b and c.

The protein resides in the cell membrane. Functionally, produces ATP from ADP in the presence of a proton gradient across the membrane. The chain is ATP synthase epsilon chain from Ruminococcus albus (strain ATCC 27210 / DSM 20455 / JCM 14654 / NCDO 2250 / 7).